Reading from the N-terminus, the 160-residue chain is Small ribosomal subunit protein uS9 (160 aa).

It belongs to the universal ribosomal protein uS9 family.

The chain is Small ribosomal subunit protein uS9 from Mesorhizobium japonicum (strain LMG 29417 / CECT 9101 / MAFF 303099) (Mesorhizobium loti (strain MAFF 303099)).